Reading from the N-terminus, the 534-residue chain is Lariat debranching enzyme (534 aa).

A divalent metal cation contacts are provided by Cys8, His10, Asp39, and Asn84. The tract at residues 124–154 (SGIFKGHDFLRGHHEFPPYTDSTCRSVYHVR) is lariat recognition loop. Residues His174, His226, and His228 each coordinate a divalent metal cation. Disordered regions lie at residues 242–275 (KLGD…PPPS) and 501–534 (TETP…AQED).

It belongs to the lariat debranching enzyme family. It depends on Fe(2+) as a cofactor. The cofactor is Zn(2+). Mn(2+) serves as cofactor.

It is found in the nucleus. Active in presence of diverse metals including Fe(2+), Zn(2+), Mn(2+). Binds two metal cations in two adjacent alpha and beta metal-binding pockets. Cleaves the 2'-5' phosphodiester linkage at the branch point of lariat intron pre-mRNAs after splicing and converts them into linear molecules that are subsequently degraded. It thereby facilitates ribonucleotide turnover. This Drosophila melanogaster (Fruit fly) protein is Lariat debranching enzyme (ldbr).